The chain runs to 147 residues: Cyanate hydratase (147 aa).

Catalysis depends on residues Arg88, Glu91, and Ser114.

This sequence belongs to the cyanase family.

It carries out the reaction cyanate + hydrogencarbonate + 3 H(+) = NH4(+) + 2 CO2. Catalyzes the reaction of cyanate with bicarbonate to produce ammonia and carbon dioxide. In Methylibium petroleiphilum (strain ATCC BAA-1232 / LMG 22953 / PM1), this protein is Cyanate hydratase.